The following is an 83-amino-acid chain: DNA-directed RNA polymerase subunit Rpo5 (83 aa).

This sequence belongs to the archaeal Rpo5/eukaryotic RPB5 RNA polymerase subunit family. Part of the RNA polymerase complex.

The protein resides in the cytoplasm. The enzyme catalyses RNA(n) + a ribonucleoside 5'-triphosphate = RNA(n+1) + diphosphate. DNA-dependent RNA polymerase (RNAP) catalyzes the transcription of DNA into RNA using the four ribonucleoside triphosphates as substrates. This Nitrosopumilus maritimus (strain SCM1) protein is DNA-directed RNA polymerase subunit Rpo5.